The following is a 62-amino-acid chain: Large ribosomal subunit protein bL28 (62 aa).

This sequence belongs to the bacterial ribosomal protein bL28 family.

The protein is Large ribosomal subunit protein bL28 of Clostridioides difficile (strain 630) (Peptoclostridium difficile).